Reading from the N-terminus, the 201-residue chain is Large ribosomal subunit protein uL4 (201 aa).

Positions 44–66 are disordered; sequence KAQKTRAEVRGGGKKPWRQKGTG. The span at 55-66 shows a compositional bias: basic residues; the sequence is GGKKPWRQKGTG.

This sequence belongs to the universal ribosomal protein uL4 family. In terms of assembly, part of the 50S ribosomal subunit.

One of the primary rRNA binding proteins, this protein initially binds near the 5'-end of the 23S rRNA. It is important during the early stages of 50S assembly. It makes multiple contacts with different domains of the 23S rRNA in the assembled 50S subunit and ribosome. Its function is as follows. Forms part of the polypeptide exit tunnel. The protein is Large ribosomal subunit protein uL4 of Alteromonas mediterranea (strain DSM 17117 / CIP 110805 / LMG 28347 / Deep ecotype).